Here is a 501-residue protein sequence, read N- to C-terminus: Betaine aldehyde dehydrogenase, chloroplastic (501 aa).

A chloroplast-targeting transit peptide spans 1–7 (MAIRVPS). An NAD(+)-binding site is contributed by 238–243 (GSTATG). Catalysis depends on E260, which acts as the Proton acceptor. The active-site Nucleophile is C294.

The protein belongs to the aldehyde dehydrogenase family. As to quaternary structure, homodimer.

Its subcellular location is the plastid. The protein localises to the chloroplast. It catalyses the reaction betaine aldehyde + NAD(+) + H2O = glycine betaine + NADH + 2 H(+). The protein operates within amine and polyamine biosynthesis; betaine biosynthesis via choline pathway; betaine from betaine aldehyde: step 1/1. This chain is Betaine aldehyde dehydrogenase, chloroplastic (BADH4), found in Amaranthus hypochondriacus (Prince-of-Wales feather).